A 217-amino-acid chain; its full sequence is ATP-dependent Clp protease proteolytic subunit 1 (217 aa).

The interval 1–24 is disordered; it reads MTPLTTGWHPALSPRAEEGDTPPS. Ser-108 (nucleophile) is an active-site residue. Residue His-133 is part of the active site.

This sequence belongs to the peptidase S14 family. In terms of assembly, fourteen ClpP subunits assemble into 2 heptameric rings which stack back to back to give a disk-like structure with a central cavity, resembling the structure of eukaryotic proteasomes.

The protein resides in the cytoplasm. The catalysed reaction is Hydrolysis of proteins to small peptides in the presence of ATP and magnesium. alpha-casein is the usual test substrate. In the absence of ATP, only oligopeptides shorter than five residues are hydrolyzed (such as succinyl-Leu-Tyr-|-NHMec, and Leu-Tyr-Leu-|-Tyr-Trp, in which cleavage of the -Tyr-|-Leu- and -Tyr-|-Trp bonds also occurs).. In terms of biological role, cleaves peptides in various proteins in a process that requires ATP hydrolysis. Has a chymotrypsin-like activity. Plays a major role in the degradation of misfolded proteins. In Streptomyces avermitilis (strain ATCC 31267 / DSM 46492 / JCM 5070 / NBRC 14893 / NCIMB 12804 / NRRL 8165 / MA-4680), this protein is ATP-dependent Clp protease proteolytic subunit 1.